Here is a 1230-residue protein sequence, read N- to C-terminus: Serine/threonine-protein kinase PDK1 (1230 aa).

Residues 1 to 277 (MASSHFGPAS…ASSGALKKHS (277 aa)) are disordered. The segment covering 34–50 (SSSSSSRSTTTCSSTSS) has biased composition (low complexity). The span at 62–76 (ETSTAATSRSQLPSN) shows a compositional bias: polar residues. Positions 77-87 (RHSENEAEHDT) are enriched in basic and acidic residues. 2 stretches are compositionally biased toward polar residues: residues 107-117 (PRSNRLGTSPQ) and 140-175 (SKRQSNTETVSGTSPSTPLGKSFLAQQDLSPNSSTI). The span at 185–202 (PNDRLSHDRESHSAERPR) shows a compositional bias: basic and acidic residues. Residues 217–226 (STPSSPTNSY) are compositionally biased toward polar residues. Residues 252–262 (ARDGDDRERRQ) are compositionally biased toward basic and acidic residues. The Protein kinase domain maps to 281-801 (WVLGEELGVG…ITFIKTHPFF (521 aa)). ATP is bound by residues 291-293 (SYS) and Lys319. Disordered regions lie at residues 345–522 (LSDP…RSGA) and 534–597 (TLPP…KMSA). 2 stretches are compositionally biased toward polar residues: residues 378 to 397 (TASIGGQSSMASVSGGTVSN) and 408 to 433 (IVTTSSAASSPVLTASSGSTQLSPTA). Composition is skewed to basic and acidic residues over residues 466–494 (GGEDGKDGQDGQETPSREWDRDRDWDNMT) and 502–521 (VREESAEGGEKEKDEEERSG). A compositionally biased stretch (pro residues) spans 535–544 (LPPPQIPSTP). Basic and acidic residues predominate over residues 555–569 (DGHRTSRETPRDRPH). ATP is bound by residues 621-623 (SLA) and Glu627. The Proton acceptor role is filled by Asp666. Glu670 and Asp684 together coordinate ATP. The segment covering 850-859 (EDEDGFEYDA) has biased composition (acidic residues). Disordered regions lie at residues 850–871 (EDEDGFEYDADTVSPRPEGGAV), 907–955 (LGED…GGNR), 972–1035 (GGGM…SDEA), and 1116–1152 (EADGDPAGSDSGAGLSSSSHVESGGGGVGGGGRGGGH). A compositionally biased stretch (basic and acidic residues) spans 927–942 (GKREKEVEKKKGEKAR). Composition is skewed to low complexity over residues 977–992 (GSATSVAASDTVRTPG), 1002–1030 (RPGSRAGIPSFGLGPGSGSRSNRGSGASM), and 1120–1137 (DPAGSDSGAGLSSSSHVE). A compositionally biased stretch (gly residues) spans 1138-1152 (SGGGGVGGGGRGGGH).

The protein belongs to the protein kinase superfamily. AGC Ser/Thr protein kinase family. PDPK1 subfamily.

It carries out the reaction L-seryl-[protein] + ATP = O-phospho-L-seryl-[protein] + ADP + H(+). The enzyme catalyses L-threonyl-[protein] + ATP = O-phospho-L-threonyl-[protein] + ADP + H(+). Its function is as follows. Serine/threonine-protein kinase that functions in the sphingolipid-mediated signaling pathway, regulating organization of the plasma membrane. May phosphorylate PKC1 to activate the cell integrity MAPK cascade during cell wall and membrane stress. May regulate sphingolipid metabolism upstream of YPK1. In Cryptococcus neoformans var. grubii serotype A (strain H99 / ATCC 208821 / CBS 10515 / FGSC 9487) (Filobasidiella neoformans var. grubii), this protein is Serine/threonine-protein kinase PDK1.